A 59-amino-acid chain; its full sequence is UPF0434 protein PMI0721 (59 aa).

Belongs to the UPF0434 family.

The sequence is that of UPF0434 protein PMI0721 from Proteus mirabilis (strain HI4320).